Consider the following 291-residue polypeptide: Nucleotide-binding protein lwe2422 (291 aa).

13-20 is a binding site for ATP; sequence GMSGAGKT. Residue 63-66 coordinates GTP; the sequence is DLRG.

This sequence belongs to the RapZ-like family.

Its function is as follows. Displays ATPase and GTPase activities. This chain is Nucleotide-binding protein lwe2422, found in Listeria welshimeri serovar 6b (strain ATCC 35897 / DSM 20650 / CCUG 15529 / CIP 8149 / NCTC 11857 / SLCC 5334 / V8).